Consider the following 994-residue polypeptide: MEQAHTKTTEECLAYFGVNENTGLSLDQVKKNFDKFGPNELPAEEGKSLWELVAEQFEDLLVRILLLAAIISFVLAWFEEGEETVTAFVEPFVILLILIANAVVGVWQERNAEDAIEALKEYEPEMGKVYRSDRKSVQRIKARELVPGDIVEVAVGDKVPADIRLISIKSTTLRIDQSILTGESVSVIKHTEVVPDTRAVNQDKKNMLFSGTNVGAGKAVGVVIATGPNTEIGKIRDEMAATEQEKTPLQQKLDEFGEQLSKVISLICVAVWLINIGHFNDPIHGGSWIKGAIYYFKIAVALAVAAIPEGLPAVITTCLALGTRRMAKKNAIVRSLPSVETLGCTSVICSDKTGTLTTNQMSVCRMFVIDKVEGDVTSLNEFTITGSTYAPEGDVQKNDKNVKAGQYDGLVELATICALCNDSSLDFNESKGVFEKVGEATETALTTLVEKMNVFNTDVKSLSKVERANACNSVIKQLMKKEFTLEFSRDRKSMSVYCIPAKASRAAVGNKMFVKGAPEGVIDRCNYVRVGTTRVPLTSAIKDKILSVVKEWGTGRDTLRCLALATRDTPPKREDMVLDEATRFIEYETDLTFVGCVGMLDPPRKEVMGSIQLCREAGIRVIMITGDNKGTAIAICRRIGIFGEDDDVSGRAFTGREFDDLPPAEQREACKRASCFARVEPAHKSKIVEFLQSFDEITAMTGDGVNDAPALKKAEIGIAMGSGTAVAKTASEMVLADDNFSTIVAAVEEGRAIYNNMKQFIRYLISSNVGEVVCIFLTAALGLPEALIPVQLLWVNLVTDGLPATALGFNPPDLDIMDRPPRSPKEPLISGWLFFRYMAIGGYVGAATVGAAAWWFMYADDGPNVTFYQLSHFMQCTEDNPDFEGHECEIFESPVPMTMALSVLVTIEMCNALNSLSENQSLIRMPPWSNFWLLGSICLSMSLHFLILYVEPLPMIFKLTPLNVEQWFIVLKMSFPVILLDELLKFVARNYLEG.

Residues Met1–Ser48 lie on the Cytoplasmic side of the membrane. A helical membrane pass occupies residues Leu49–Ala69. The Lumenal segment spans residues Ile70 to Val89. A helical membrane pass occupies residues Glu90 to Arg110. At Asn111 to Leu253 the chain is on the cytoplasmic side. Residues Asp254–Leu273 form a helical membrane-spanning segment. Topologically, residues Ile274–Tyr295 are lumenal. A helical transmembrane segment spans residues Phe296–Ala313. Residues Val304, Ala305, Ile307, and Glu309 each contribute to the Ca(2+) site. Residues Val314–Met757 are Cytoplasmic-facing. Asp351 functions as the 4-aspartylphosphate intermediate in the catalytic mechanism. Positions 351 and 353 each coordinate Mg(2+). ATP contacts are provided by Thr353, Glu442, Arg489, Lys515, Arg560, Thr625, Gly626, Asp627, Arg678, and Lys684. Asp703 contacts Mg(2+). Asn706 is an ATP binding site. A helical membrane pass occupies residues Lys758–Leu777. The Ca(2+) site is built by Asn768 and Glu771. At Thr778–Leu787 the chain is on the lumenal side. The chain crosses the membrane as a helical span at residues Ile788–Gly808. Residues Ile788 to Gly808 are interaction with PLN. Ca(2+) is bound by residues Asn796, Thr799, and Asp800. The Cytoplasmic segment spans residues Phe809–Leu828. The helical transmembrane segment at Ile829–Ala851 threads the bilayer. The Lumenal segment spans residues Ala852–Met897. The cysteines at positions 876 and 888 are disulfide-linked. The chain crosses the membrane as a helical span at residues Thr898–Ser917. Residue Glu908 coordinates Ca(2+). Topologically, residues Glu918–Asn930 are cytoplasmic. A helical membrane pass occupies residues Phe931–Tyr949. Residues Trp932–Leu943 form an interaction with PLN region. Residues Val950–Val964 lie on the Lumenal side of the membrane. The chain crosses the membrane as a helical span at residues Glu965 to Lys985. At Phe986–Gly994 the chain is on the cytoplasmic side.

Belongs to the cation transport ATPase (P-type) (TC 3.A.3) family. Type IIA subfamily. As to quaternary structure, interacts with sarcolipin (SLN). Interacts with phospholamban (PLN). Interacts with myoregulin (MRLN). Interacts with DWORF. Interacts with VMP1. Requires Mg(2+) as cofactor.

It localises to the endoplasmic reticulum membrane. It is found in the sarcoplasmic reticulum membrane. It carries out the reaction Ca(2+)(in) + ATP + H2O = Ca(2+)(out) + ADP + phosphate + H(+). Its activity is regulated as follows. Inhibited by sarcolipin (SLN) and myoregulin (MRLN). Also shown to be inhibited by phospholamban (PLN) in vitro. Enhanced by DWORF; DWORF increases activity by displacing sarcolipin (SLN), phospholamban (PLN) and myoregulin (MRLN). Key regulator of striated muscle performance by acting as the major Ca(2+) ATPase responsible for the reuptake of cytosolic Ca(2+) into the sarcoplasmic reticulum. Catalyzes the hydrolysis of ATP coupled with the translocation of calcium from the cytosol to the sarcoplasmic reticulum lumen. Contributes to calcium sequestration involved in muscular excitation/contraction. In Pelophylax lessonae (Pool frog), this protein is Sarcoplasmic/endoplasmic reticulum calcium ATPase 1 (ATP2A1).